Reading from the N-terminus, the 315-residue chain is Ribosomal RNA small subunit methyltransferase H (315 aa).

S-adenosyl-L-methionine-binding positions include 34 to 36 (GGH), aspartate 53, aspartate 100, and histidine 107.

It belongs to the methyltransferase superfamily. RsmH family.

It localises to the cytoplasm. The enzyme catalyses cytidine(1402) in 16S rRNA + S-adenosyl-L-methionine = N(4)-methylcytidine(1402) in 16S rRNA + S-adenosyl-L-homocysteine + H(+). Its function is as follows. Specifically methylates the N4 position of cytidine in position 1402 (C1402) of 16S rRNA. In Treponema denticola (strain ATCC 35405 / DSM 14222 / CIP 103919 / JCM 8153 / KCTC 15104), this protein is Ribosomal RNA small subunit methyltransferase H.